A 157-amino-acid chain; its full sequence is Polyferredoxin protein VhcB (157 aa).

3 4Fe-4S ferredoxin-type domains span residues 23 to 52 (NGIS…VVNP), 62 to 92 (KTER…MGKI), and 100 to 129 (DRIE…LNEE). [4Fe-4S] cluster is bound by residues Cys-32, Cys-35, Cys-38, Cys-42, Cys-72, Cys-75, Cys-78, Cys-82, Cys-109, Cys-112, Cys-115, Cys-119, Cys-136, Cys-139, Cys-142, and Cys-146.

It depends on [4Fe-4S] cluster as a cofactor.

The protein is Polyferredoxin protein VhcB (vhcB) of Methanococcus voltae.